The chain runs to 217 residues: Dual specificity phosphatase 29 (217 aa).

The 149-residue stretch at 46-194 (HVNEVWPNLY…LRELDIKLAL (149 aa)) folds into the Tyrosine-protein phosphatase domain. 138-145 (HCAMGRSR) lines the substrate pocket. The Phosphocysteine intermediate role is filled by Cys-139.

Belongs to the protein-tyrosine phosphatase family. Non-receptor class dual specificity subfamily.

It localises to the cytoplasm. The protein resides in the nucleus. The enzyme catalyses O-phospho-L-tyrosyl-[protein] + H2O = L-tyrosyl-[protein] + phosphate. The catalysed reaction is O-phospho-L-seryl-[protein] + H2O = L-seryl-[protein] + phosphate. It carries out the reaction O-phospho-L-threonyl-[protein] + H2O = L-threonyl-[protein] + phosphate. Its function is as follows. Dual specificity phosphatase able to dephosphorylate phosphotyrosine, phosphoserine and phosphothreonine residues within the same substrate, with a preference for phosphotyrosine as a substrate. Involved in the modulation of AMPK and MAPK1/2 signaling pathways. The chain is Dual specificity phosphatase 29 (DUSP29) from Anolis carolinensis (Green anole).